We begin with the raw amino-acid sequence, 345 residues long: Dihydroorotase (345 aa).

Residues His-13 and His-15 each coordinate Zn(2+). Residues 15–17 (HFR) and Asn-41 each bind substrate. Zn(2+) is bound by residues Lys-98, His-135, and His-173. Lys-98 carries the N6-carboxylysine modification. His-135 provides a ligand contact to substrate. Leu-218 contributes to the substrate binding site. Zn(2+) is bound at residue Asp-246. The active site involves Asp-246. His-250 and Ala-262 together coordinate substrate.

Belongs to the metallo-dependent hydrolases superfamily. DHOase family. Class II DHOase subfamily. Homodimer. The cofactor is Zn(2+).

The enzyme catalyses (S)-dihydroorotate + H2O = N-carbamoyl-L-aspartate + H(+). The protein operates within pyrimidine metabolism; UMP biosynthesis via de novo pathway; (S)-dihydroorotate from bicarbonate: step 3/3. In terms of biological role, catalyzes the reversible cyclization of carbamoyl aspartate to dihydroorotate. In Shewanella halifaxensis (strain HAW-EB4), this protein is Dihydroorotase.